We begin with the raw amino-acid sequence, 386 residues long: Aspergillopepsin-1 (386 aa).

Residues Met1 to Ala20 form the signal peptide. Residues Met21–Met69 constitute a propeptide, activation peptide. A Peptidase A1 domain is found at Tyr85–Ala383. The active site involves Asp101. Residue Asn130 is glycosylated (N-linked (GlcNAc...) asparagine). Asp275 is an active-site residue. Cys311 and Cys346 are disulfide-bonded.

Belongs to the peptidase A1 family. In terms of assembly, monomer.

It localises to the secreted. The enzyme catalyses Hydrolysis of proteins with broad specificity. Generally favors hydrophobic residues in P1 and P1', but also accepts Lys in P1, which leads to activation of trypsinogen. Does not clot milk.. Secreted aspartic endopeptidase that allows assimilation of proteinaceous substrates. The scissile peptide bond is attacked by a nucleophilic water molecule activated by two aspartic residues in the active site. Shows a broad primary substrate specificity. Favors hydrophobic residues at the P1 and P1' positions, but also accepts a lysine residue in the P1 position, leading to the activation of trypsinogen and chymotrypsinogen A. The chain is Aspergillopepsin-1 from Emericella nidulans (strain FGSC A4 / ATCC 38163 / CBS 112.46 / NRRL 194 / M139) (Aspergillus nidulans).